A 204-amino-acid polypeptide reads, in one-letter code: Pyridoxal 5'-phosphate synthase subunit PdxT (204 aa).

52-54 serves as a coordination point for L-glutamine; it reads GES. C84 serves as the catalytic Nucleophile. L-glutamine is bound by residues R116 and 143-144; that span reads IR. Residues H184 and E186 each act as charge relay system in the active site.

Belongs to the glutaminase PdxT/SNO family. In the presence of PdxS, forms a dodecamer of heterodimers. Only shows activity in the heterodimer.

It catalyses the reaction aldehydo-D-ribose 5-phosphate + D-glyceraldehyde 3-phosphate + L-glutamine = pyridoxal 5'-phosphate + L-glutamate + phosphate + 3 H2O + H(+). The catalysed reaction is L-glutamine + H2O = L-glutamate + NH4(+). The protein operates within cofactor biosynthesis; pyridoxal 5'-phosphate biosynthesis. Functionally, catalyzes the hydrolysis of glutamine to glutamate and ammonia as part of the biosynthesis of pyridoxal 5'-phosphate. The resulting ammonia molecule is channeled to the active site of PdxS. The protein is Pyridoxal 5'-phosphate synthase subunit PdxT of Pyrobaculum arsenaticum (strain DSM 13514 / JCM 11321 / PZ6).